The following is a 379-amino-acid chain: UDP-4-amino-4-deoxy-L-arabinose--oxoglutarate aminotransferase (379 aa).

Lys182 bears the N6-(pyridoxal phosphate)lysine mark.

It belongs to the DegT/DnrJ/EryC1 family. ArnB subfamily. As to quaternary structure, homodimer. Pyridoxal 5'-phosphate serves as cofactor.

It catalyses the reaction UDP-4-amino-4-deoxy-beta-L-arabinose + 2-oxoglutarate = UDP-beta-L-threo-pentopyranos-4-ulose + L-glutamate. It functions in the pathway nucleotide-sugar biosynthesis; UDP-4-deoxy-4-formamido-beta-L-arabinose biosynthesis; UDP-4-deoxy-4-formamido-beta-L-arabinose from UDP-alpha-D-glucuronate: step 2/3. It participates in bacterial outer membrane biogenesis; lipopolysaccharide biosynthesis. Its function is as follows. Catalyzes the conversion of UDP-4-keto-arabinose (UDP-Ara4O) to UDP-4-amino-4-deoxy-L-arabinose (UDP-L-Ara4N). The modified arabinose is attached to lipid A and is required for resistance to polymyxin and cationic antimicrobial peptides. The polypeptide is UDP-4-amino-4-deoxy-L-arabinose--oxoglutarate aminotransferase (Salmonella agona (strain SL483)).